Reading from the N-terminus, the 278-residue chain is Urease accessory protein UreD (278 aa).

This sequence belongs to the UreD family. In terms of assembly, ureD, UreF and UreG form a complex that acts as a GTP-hydrolysis-dependent molecular chaperone, activating the urease apoprotein by helping to assemble the nickel containing metallocenter of UreC. The UreE protein probably delivers the nickel.

It localises to the cytoplasm. Required for maturation of urease via the functional incorporation of the urease nickel metallocenter. The protein is Urease accessory protein UreD of Staphylococcus epidermidis (strain ATCC 12228 / FDA PCI 1200).